The sequence spans 403 residues: Flavohemoprotein (403 aa).

The region spanning 1–138 (MLTQKTKDIV…LADILAGMES (138 aa)) is the Globin domain. His85 lines the heme b pocket. Catalysis depends on charge relay system residues Tyr95 and Glu137. The reductase stretch occupies residues 149 to 403 (GGWAGWRRFI…EVFGPDLFAE (255 aa)). An FAD-binding FR-type domain is found at 152–262 (AGWRRFIVRE…AAPYGNFYID (111 aa)). FAD-binding positions include Tyr190 and 206-209 (RQYS). 275–280 (GVGLTP) contacts NADP(+). 395 to 398 (VFGP) contacts FAD.

Belongs to the globin family. Two-domain flavohemoproteins subfamily. This sequence in the C-terminal section; belongs to the flavoprotein pyridine nucleotide cytochrome reductase family. Heme b is required as a cofactor. Requires FAD as cofactor.

The catalysed reaction is 2 nitric oxide + NADPH + 2 O2 = 2 nitrate + NADP(+) + H(+). It catalyses the reaction 2 nitric oxide + NADH + 2 O2 = 2 nitrate + NAD(+) + H(+). In terms of biological role, is involved in NO detoxification in an aerobic process, termed nitric oxide dioxygenase (NOD) reaction that utilizes O(2) and NAD(P)H to convert NO to nitrate, which protects the bacterium from various noxious nitrogen compounds. Therefore, plays a central role in the inducible response to nitrosative stress. The sequence is that of Flavohemoprotein from Rhizobium meliloti (strain 1021) (Ensifer meliloti).